A 238-amino-acid polypeptide reads, in one-letter code: IkB-like protein (238 aa).

4 ANK repeats span residues 47–76 (NGSS…YPGE), 86–119 (DGNS…RICL), 123–152 (NGIT…DPTQ), and 157–186 (RGFT…KPLY). Positions 80–86 (PHRRDKD) match the Nuclear localization signal motif. The short motif at 202 to 213 (KKKPKIIITGCK) is the Nuclear localization signal element. The short motif at 205 to 212 (PKIIITGC) is the PxIxITxC motif; Interaction with host PPP3CA element. The FLCV motif motif lies at 227–230 (FLCV).

This sequence belongs to the asfivirus A238L family. In terms of assembly, interacts with host PPIA. Interacts with host PPP3CA/Calcineurin. Interacts with host RELA/p65; interaction of the 32 kDa form with host RELA results in the formation of a stable complex with NF-kappa-B. Interacts with host PPP3R1. Interacts with host EP300; this interaction inhibits the association of host EP300 with host RELA, JUN and NFATC2. In terms of processing, the protein exists in a 28 kDa and a 32 kDa form, probably due to post-translational modifications which are neither phosphorylation, nor sumoylation.

Its subcellular location is the host nucleus. It localises to the host cytoplasm. In terms of biological role, ikB-like protein that inhibits the binding of NF-kappa-B to DNA, thereby downregulating pro-inflammatory cytokine production. Forms a heterodimer with the NF-kappa-B subunit RELA/p65 and prevents the activation of the NF-kappa-B transcription factor. Inhibits calcineurin function, which is required for the induction of nuclear factor of activated T cells (NFAT)-dependent immune response genes. Prevents the binding of substrates to calcineurin without affecting the phosphatase activity. Does not contain the serine residues that are phosphorylated by host IkB kinase and thus is not degraded following stimulation of the NFkB pathway. This chain is IkB-like protein (A238L), found in African swine fever virus (isolate Warthog/Namibia/Wart80/1980) (ASFV).